We begin with the raw amino-acid sequence, 670 residues long: MKLAVLFCFILLIVLQTDCERGTRRQRRRMHQRRLRKSSSFHLRANRQLEVQQTTAAPDARLPTANSDYSVEENIESLLSNLGVESSYSVLPGKKGYCFVKGMIMYNKAVWSPEPCTTCLCSNGRVLCDETECHPKACPYTIKPEGECCPICSDAEQESINKLHKQVPPPQMEMDQVAIKEALQSEEDEEIAEGHKEHKKETSVPTKIHGDGERTERKLRPEKEGRSAHQPLYHGRREEEESKEETEREGEEEEEEEEEEEEDAIRGDVFRMSSRVIPGTPRGRPRLPRSCSLSYRTISCVHADFTEIPPITAPEVTNLELVGNSIISIPDEAFNGLPNLERLDLSRNNITSSGIGPKAFKSLKKLMRLNMDGNNLVHIPSDLPSTLEELKINDNNLQAIDEKSLSDLNQLVTLELEGNNLSEINVDPLAFQSLESLSYLRLGRNKFRIIPQGLPASTEELYLENNQIEEITEICFNHTRKITMIILRYNKIEESRIAPLAWINQENLESIDLSYNKLYHVPSYLPKSLLHLVLIGNQIDRIPGYVFGHMQPGLEYLYLSFNRLSDDGVDLVSFYGAYHSLRELFLDHNDFKSIPPGIQDMKALHFLRLNNNKIRNIHPEQICNAEEDEDSALEHLHLENNYIRTREISSYAFSCIRLYSSIVLKPQHIK.

Positions 1-19 (MKLAVLFCFILLIVLQTDC) are cleaved as a signal peptide. The VWFC domain occupies 96–153 (GYCFVKGMIMYNKAVWSPEPCTTCLCSNGRVLCDETECHPKACPYTIKPEGECCPICS). The segment at 185-270 (SEEDEEIAEG…EEDAIRGDVF (86 aa)) is disordered. Residues 192–227 (AEGHKEHKKETSVPTKIHGDGERTERKLRPEKEGRS) are compositionally biased toward basic and acidic residues. A compositionally biased stretch (acidic residues) spans 241-263 (ESKEETEREGEEEEEEEEEEEED). The Cell attachment site signature appears at 266 to 268 (RGD). The LRRNT domain occupies 278-315 (PGTPRGRPRLPRSCSLSYRTISCVHADFTEIPPITAPE). LRR repeat units follow at residues 339–359 (NLERLDLSRNNITSSGIGPKA), 365–386 (KLMRLNMDGNNLVHIPSDLPST), 387–407 (LEELKINDNNLQAIDEKSLSD), 410–430 (QLVTLELEGNNLSEINVDPLA), 436–456 (SLSYLRLGRNKFRIIPQGLPA), 457–478 (STEELYLENNQIEEITEICFNH), 481–501 (KITMIILRYNKIEESRIAPLA), 507–528 (NLESIDLSYNKLYHVPSYLPKS), 529–549 (LLHLVLIGNQIDRIPGYVFGH), 553–573 (GLEYLYLSFNRLSDDGVDLVS), 580–601 (SLRELFLDHNDFKSIPPGIQDM), 603–624 (ALHFLRLNNNKIRNIHPEQICN), and 632–655 (ALEHLHLENNYIRTREISSYAFSC). The N-linked (GlcNAc...) asparagine glycan is linked to Asn349. A glycan (N-linked (GlcNAc...) asparagine) is linked at Asn420. Asn477 carries N-linked (GlcNAc...) asparagine glycosylation.

Belongs to the small leucine-rich proteoglycan (SLRP) family. SLRP class I subfamily. Interacts with numerous extracellular matrix proteins. Interacts with isoform 1 of MSL1. Interacts with isoform 3 of RASSF1.

The protein localises to the secreted. It is found in the extracellular space. It localises to the extracellular matrix. Promotes matrix assembly and cell adhesiveness. This is Extracellular matrix protein 2 (Ecm2) from Mus musculus (Mouse).